The chain runs to 416 residues: PDZ and LIM domain protein 7 (416 aa).

A PDZ domain is found at methionine 1–glutamine 85. 2 disordered regions span residues cysteine 145–proline 191 and threonine 202–arginine 221. Residues proline 168–proline 181 are compositionally biased toward low complexity. LIM zinc-binding domains are found at residues proline 239–alanine 297, proline 298–threonine 357, and lysine 358–valine 416.

Interacts with various PKC isoforms through the LIM zinc-binding domains. Interacts with TPM2. Interacts with TBX4 and TBX5.

It is found in the cytoplasm. Its subcellular location is the cytoskeleton. It localises to the myofibril. The protein localises to the sarcomere. The protein resides in the z line. Its function is as follows. May function as a scaffold on which the coordinated assembly of proteins can occur. May play a role as an adapter that, via its PDZ domain, localizes LIM-binding proteins to actin filaments of both skeletal muscle and nonmuscle tissues. May be involved in bone formation. The protein is PDZ and LIM domain protein 7 (PDLIM7) of Gallus gallus (Chicken).